The sequence spans 418 residues: Putative ion-transport protein YfeO (418 aa).

The next 11 membrane-spanning stretches (helical) occupy residues 9–31, 55–77, 90–112, 122–140, 147–169, 189–211, 223–244, 259–281, 301–323, 343–363, and 376–398; these read MLLL…IVVM, SPLW…IRFS, LIGA…LGLA, PIMT…RLLP, WTIL…AALI, PLMA…FSLP, ILSG…VWCL, LVLG…VSLF, YFLL…FRGG, VPAV…VLVV, and VVVP…WLLL.

Belongs to the chloride channel (TC 2.A.49) family.

Its subcellular location is the cell membrane. The protein is Putative ion-transport protein YfeO (yfeO) of Escherichia coli O157:H7.